Reading from the N-terminus, the 466-residue chain is Cell division protein FtsP (466 aa).

A signal peptide (tat-type signal) is located at residues 1 to 28 (MGNYSRRRFLQGSLAIVAGNVLPCAAMA).

Belongs to the FtsP family. Post-translationally, predicted to be exported by the Tat system. The position of the signal peptide cleavage has not been experimentally proven.

The protein localises to the periplasm. Cell division protein that is required for growth during stress conditions. May be involved in protecting or stabilizing the divisomal assembly under conditions of stress. The chain is Cell division protein FtsP from Gallibacterium anatis (strain UMN179) (Pasteurella anatis).